The sequence spans 502 residues: Acetylcholine receptor subunit alpha-type unc-63 (502 aa).

The signal sequence occupies residues 1-23 (MGPNDHGFAYILIFLLLSPPTHA). Topologically, residues 24–263 (NRDANRLFED…HLRRKTLFYT (240 aa)) are extracellular. Asn136 carries an N-linked (GlcNAc...) asparagine glycan. Cys151 and Cys165 are disulfide-bonded. The next 3 membrane-spanning stretches (helical) occupy residues 264–284 (VNLI…FYLP), 293–313 (LCIS…EIIP), and 326–346 (LLFT…TLNV). The Cytoplasmic segment spans residues 347–470 (HYRSPTTHTM…WKYISVVMDR (124 aa)). The chain crosses the membrane as a helical span at residues 471-491 (IFLITFTFACAFGTVVIIARA).

Belongs to the ligand-gated ion channel (TC 1.A.9) family. Acetylcholine receptor (TC 1.A.9.1) subfamily. In terms of assembly, component of nicotinic acetylcholine receptor. In muscles, composed of 2 non-alpha subunits lev-1 and unc-29, and 3 alpha subunits unc-38, unc-63 and lev-8. In cholinergic motoneurons, composed of 2 non-alpha subunits acr-2 and acr-3, and 3 alpha subunits unc-38, unc-63 and acr-12. Interacts with lev-10. Expressed in body wall muscles, in vulval muscles and in neurons.

The protein localises to the postsynaptic cell membrane. Its subcellular location is the cell membrane. Alpha subunit of nicotinic acetylcholine receptor (nAChR). Probably acts in cholinergic motoneurons to regulate presynaptic neurotransmitter release, thereby ensuring normal level of excitation of cholinergic motoneurons during locomotion. Involved in nAChR sensitivity to nicotine and levamisole. The chain is Acetylcholine receptor subunit alpha-type unc-63 (unc-63) from Caenorhabditis elegans.